A 435-amino-acid polypeptide reads, in one-letter code: MKPLVALVGRPNVGKSTLFNRLSRSKSAITDSTPGVTRDRHIASAEWQGRKFMVMDTGGYCHDKDSLNRAMMEQTLAAIAEADVILFMVDVRSGLAYLDLDMSRMLKKNFRDKPVYLVVNKVETRQLAFEGEEFRRTGLTEPWFISAREGNGVADLLDEVVASFPDETTEEEDTAIKLAIIGRPNVGKSSFVNALLGTNRHIVSDIPGTTRDAIDSRLKRNGKEVLLIDTAGLRKRTKIDRGIEFYSSVRTDKSIERCDVALLLIDAEQGLEKQDIKIIQMAAEKRKGIVILVNKWDLIEKETNTSKQYSDRIYDQIGNLSWIPVLFISALTKKNLYRAIDTALETGQNRQKKISTSELNRFLQQVLSELPPSTKSGRELKIKYVTQIGAHYPVFAFFCNNPDLVLSNYKRFLEKRLRQTFDFTGVPVSFRYRKK.

EngA-type G domains lie at 3-168 and 176-351; these read PLVA…PDET and IKLA…QNRQ. GTP is bound by residues 9–16, 56–60, 120–123, 182–189, 229–233, and 294–297; these read GRPNVGKS, DTGGY, NKVE, DTAGL, and NKWD. A KH-like domain is found at 352–435; that stretch reads KKISTSELNR…VPVSFRYRKK (84 aa).

The protein belongs to the TRAFAC class TrmE-Era-EngA-EngB-Septin-like GTPase superfamily. EngA (Der) GTPase family. As to quaternary structure, associates with the 50S ribosomal subunit.

Functionally, GTPase that plays an essential role in the late steps of ribosome biogenesis. This is GTPase Der from Chlorobium phaeobacteroides (strain BS1).